The chain runs to 1072 residues: Dyslexia-associated protein KIAA0319 (1072 aa).

A signal peptide spans 1–20; that stretch reads MAPPTGVLSSLLLLVTIAGC. Residues 21-99 form the MANSC domain; sequence ARKQCSEGRT…PKKMGPIRSY (79 aa). The Extracellular segment spans residues 21–955; the sequence is ARKQCSEGRT…WDGESNCEWS (935 aa). Disordered stretches follow at residues 168–277 and 295–327; these read LQPS…SLPP and VTPGSTEHSIPTPPTSAAPSESTPSELPISPTT. 3 N-linked (GlcNAc...) asparagine glycosylation sites follow: N196, N219, and N262. The segment covering 254–265 has biased composition (polar residues); that stretch reads SQLQEQSSNSSG. A compositionally biased stretch (low complexity) spans 311-320; the sequence is AAPSESTPSE. 5 PKD domains span residues 341-427, 435-524, 530-620, 621-714, and 720-811; these read DNLI…VKPA, VAVV…VNNA, VANA…VQPE, NNRP…VKKE, and RARA…VQPD. N-linked (GlcNAc...) asparagine glycans are attached at residues N394, N421, N498, N513, N536, and N551. The N-linked (GlcNAc...) asparagine glycan is linked to N733. The chain crosses the membrane as a helical span at residues 956-976; sequence IFYVTVLAFTLIVLTGGFTWL. Topologically, residues 977–1072 are cytoplasmic; sequence CICCCKRQKR…ASFSYCSKDR (96 aa). The Endocytosis signal signature appears at 995 to 998; sequence YTIL. The disordered stretch occupies residues 1045-1072; that stretch reads KMERGNPKVSMNGSIRNGASFSYCSKDR. Residues 1053 to 1072 are compositionally biased toward polar residues; the sequence is VSMNGSIRNGASFSYCSKDR.

Homodimer. Interacts with AP2M1; required for clathrin-mediated endocytosis. N-glycosylated. Post-translationally, O-glycosylated. In terms of processing, shedding of the extracellular domain and intramembrane cleavage produce several proteolytic products. The intramembrane cleavage releases a soluble cytoplasmic polypeptide that translocates to the nucleolus. In terms of tissue distribution, detected in adult brain cortex and fetal frontal lobe (at protein level). Highly expressed in brain cortex, putamen, amygdala, hippocampus and cerebellum.

Its subcellular location is the cell membrane. The protein localises to the early endosome membrane. In terms of biological role, involved in neuronal migration during development of the cerebral neocortex. May function in a cell autonomous and a non-cell autonomous manner and play a role in appropriate adhesion between migrating neurons and radial glial fibers. May also regulate growth and differentiation of dendrites. This is Dyslexia-associated protein KIAA0319 (KIAA0319) from Homo sapiens (Human).